The following is a 275-amino-acid chain: Rhamnulose-1-phosphate aldolase (275 aa).

Residue Glu117 is part of the active site. Residues His141, His143, and His212 each contribute to the Zn(2+) site.

It belongs to the aldolase class II family. RhaD subfamily. In terms of assembly, homotetramer. The cofactor is Zn(2+).

It localises to the cytoplasm. It catalyses the reaction L-rhamnulose 1-phosphate = (S)-lactaldehyde + dihydroxyacetone phosphate. It participates in carbohydrate degradation; L-rhamnose degradation; glycerone phosphate from L-rhamnose: step 3/3. In terms of biological role, catalyzes the reversible cleavage of L-rhamnulose-1-phosphate to dihydroxyacetone phosphate (DHAP) and L-lactaldehyde. The polypeptide is Rhamnulose-1-phosphate aldolase (Salmonella choleraesuis (strain SC-B67)).